The chain runs to 228 residues: Endo-1,4-beta-xylanase A (228 aa).

The N-terminal stretch at 1 to 27 (MNLRKLRLLFVMCIGLTLILTAVPAHA) is a signal peptide. The GH11 domain maps to 29–222 (TITNNEMGNH…SSGSANVMTN (194 aa)). The active-site Nucleophile is the glutamate 120. The active-site Proton donor is the glutamate 209.

Belongs to the glycosyl hydrolase 11 (cellulase G) family.

It carries out the reaction Endohydrolysis of (1-&gt;4)-beta-D-xylosidic linkages in xylans.. Its pathway is glycan degradation; xylan degradation. In Bacillus pumilus (Bacillus mesentericus), this protein is Endo-1,4-beta-xylanase A (xynA).